A 286-amino-acid polypeptide reads, in one-letter code: Ribosome maturation factor RimP (286 aa).

The span at 200–224 (LDGEDGDDTGVDAGDPDQDDADDAL) shows a compositional bias: acidic residues. The tract at residues 200–286 (LDGEDGDDTG…ANASTVKETH (87 aa)) is disordered. Residues 248–267 (VGRKAKGKKASPKKSNAKKK) are compositionally biased toward basic residues. A compositionally biased stretch (polar residues) spans 273 to 286 (AASSANASTVKETH).

Belongs to the RimP family.

It is found in the cytoplasm. Required for maturation of 30S ribosomal subunits. This is Ribosome maturation factor RimP from Xanthobacter autotrophicus (strain ATCC BAA-1158 / Py2).